The sequence spans 400 residues: 8-amino-7-oxononanoate synthase (400 aa).

Arg21 is a binding site for substrate. Gly112–Tyr113 is a pyridoxal 5'-phosphate binding site. His137 serves as a coordination point for substrate. The pyridoxal 5'-phosphate site is built by Ser183, His211, and Thr239. Position 242 is an N6-(pyridoxal phosphate)lysine (Lys242). Thr358 is a binding site for substrate.

Belongs to the class-II pyridoxal-phosphate-dependent aminotransferase family. BioF subfamily. In terms of assembly, homodimer. Pyridoxal 5'-phosphate is required as a cofactor.

The enzyme catalyses 6-carboxyhexanoyl-[ACP] + L-alanine + H(+) = (8S)-8-amino-7-oxononanoate + holo-[ACP] + CO2. Its pathway is cofactor biosynthesis; biotin biosynthesis. Its function is as follows. Catalyzes the decarboxylative condensation of pimeloyl-[acyl-carrier protein] and L-alanine to produce 8-amino-7-oxononanoate (AON), [acyl-carrier protein], and carbon dioxide. In Burkholderia lata (strain ATCC 17760 / DSM 23089 / LMG 22485 / NCIMB 9086 / R18194 / 383), this protein is 8-amino-7-oxononanoate synthase.